We begin with the raw amino-acid sequence, 187 residues long: Small ribosomal subunit protein uS5 (187 aa).

A disordered region spans residues 1–20 (MAERENRRDRRDDRSREETP). The S5 DRBM domain maps to 22–85 (FADRLVAINR…EQAKRQMIRV (64 aa)).

This sequence belongs to the universal ribosomal protein uS5 family. Part of the 30S ribosomal subunit. Contacts proteins S4 and S8.

With S4 and S12 plays an important role in translational accuracy. Functionally, located at the back of the 30S subunit body where it stabilizes the conformation of the head with respect to the body. The polypeptide is Small ribosomal subunit protein uS5 (Cereibacter sphaeroides (strain ATCC 17029 / ATH 2.4.9) (Rhodobacter sphaeroides)).